Here is a 1317-residue protein sequence, read N- to C-terminus: Kinesin-like protein KIF16B (1317 aa).

The region spanning 3–358 (SVKVAVRVRP…LRYANRAKNI (356 aa)) is the Kinesin motor domain. An ATP-binding site is contributed by 102-109 (GQTGSGKS). Residues 370 to 425 (VKLIRELRAEIARLKTLLAQGNQIALLDSPTALSMEEKLQQNEARVQELTKEWTNK) are a coiled coil. Phosphoserine is present on S398. In terms of domain architecture, FHA spans 478-529 (TYVGRDDASTEQDIVLHGLDLESEHCIFENIGGTVTLIPLSGSQCSVNGVQI). At T577 the chain carries Phosphothreonine. S582 bears the Phosphoserine mark. Coiled coils occupy residues 595-882 (GLEF…DESV) and 936-1087 (LSLD…VQKD). A compositionally biased stretch (polar residues) spans 1036 to 1048 (LASLNSGSREQSG). The interval 1036-1057 (LASLNSGSREQSGLQASLEAEQ) is disordered. S1052 bears the Phosphoserine mark. The 115-residue stretch at 1182–1296 (DPIKISIPRY…KVGLTLSKHT (115 aa)) folds into the PX domain.

This sequence belongs to the TRAFAC class myosin-kinesin ATPase superfamily. Kinesin family. In terms of assembly, interacts with RAB14. Interacts with PTPN21. In terms of tissue distribution, primarily expressed in brain. Also present in kidney, liver, intestine, placenta, leukocytes, heart and skeletal muscle (at protein level).

The protein resides in the cytoplasm. It localises to the cytoskeleton. The protein localises to the early endosome membrane. Its subcellular location is the spindle. Functionally, plus end-directed microtubule-dependent motor protein involved in endosome transport and receptor recycling and degradation. Regulates the plus end motility of early endosomes and the balance between recycling and degradation of receptors such as EGF receptor (EGFR) and FGF receptor (FGFR). Regulates the Golgi to endosome transport of FGFR-containing vesicles during early development, a key process for developing basement membrane and epiblast and primitive endoderm lineages during early postimplantation development. The polypeptide is Kinesin-like protein KIF16B (KIF16B) (Homo sapiens (Human)).